A 431-amino-acid chain; its full sequence is Tol-Pal system protein TolB (431 aa).

A signal peptide spans 1–26; the sequence is MSLMTKLGFRALVASCLITAGSAANA. The tract at residues 411–431 is disordered; sequence PQILSVQGGSVREPSWGPFMQ.

It belongs to the TolB family. As to quaternary structure, the Tol-Pal system is composed of five core proteins: the inner membrane proteins TolA, TolQ and TolR, the periplasmic protein TolB and the outer membrane protein Pal. They form a network linking the inner and outer membranes and the peptidoglycan layer.

The protein resides in the periplasm. Part of the Tol-Pal system, which plays a role in outer membrane invagination during cell division and is important for maintaining outer membrane integrity. The protein is Tol-Pal system protein TolB of Burkholderia lata (strain ATCC 17760 / DSM 23089 / LMG 22485 / NCIMB 9086 / R18194 / 383).